Here is a 459-residue protein sequence, read N- to C-terminus: Argininosuccinate lyase (459 aa).

The protein belongs to the lyase 1 family. Argininosuccinate lyase subfamily.

The protein localises to the cytoplasm. The enzyme catalyses 2-(N(omega)-L-arginino)succinate = fumarate + L-arginine. It functions in the pathway amino-acid biosynthesis; L-arginine biosynthesis; L-arginine from L-ornithine and carbamoyl phosphate: step 3/3. This Methylobacterium radiotolerans (strain ATCC 27329 / DSM 1819 / JCM 2831 / NBRC 15690 / NCIMB 10815 / 0-1) protein is Argininosuccinate lyase.